We begin with the raw amino-acid sequence, 544 residues long: Inosine-5'-monophosphate dehydrogenase (544 aa).

2 consecutive CBS domains span residues 132–192 (FITD…PIKS) and 194–250 (MTTE…PYAS). Residues 288–290 (DSS) and 338–340 (GMG) contribute to the NAD(+) site. 2 residues coordinate K(+): glycine 340 and glycine 342. Serine 343 contacts IMP. Position 345 (cysteine 345) interacts with K(+). The active-site Thioimidate intermediate is cysteine 345. Residues 378–380 (DGG), 401–402 (GG), and 425–429 (YRGMG) contribute to the IMP site. Catalysis depends on arginine 458, which acts as the Proton acceptor. Glutamine 470 lines the IMP pocket. K(+)-binding residues include glutamate 529, glycine 530, and glycine 531.

The protein belongs to the IMPDH/GMPR family. In terms of assembly, homotetramer. K(+) serves as cofactor.

Its subcellular location is the cytoplasm. The catalysed reaction is IMP + NAD(+) + H2O = XMP + NADH + H(+). Its pathway is purine metabolism; XMP biosynthesis via de novo pathway; XMP from IMP: step 1/1. Mycophenolic acid (MPA) is a non-competitive inhibitor that prevents formation of the closed enzyme conformation by binding to the same site as the amobile flap. In contrast, mizoribine monophosphate (MZP) is a competitive inhibitor that induces the closed conformation. MPA is a potent inhibitor of mammalian IMPDHs but a poor inhibitor of the bacterial enzymes. MZP is a more potent inhibitor of bacterial IMPDH. Functionally, catalyzes the conversion of inosine 5'-phosphate (IMP) to xanthosine 5'-phosphate (XMP), the first committed and rate-limiting step in the de novo synthesis of guanine nucleotides, and therefore plays an important role in the regulation of cell growth. This chain is Inosine-5'-monophosphate dehydrogenase, found in Cryptococcus neoformans var. neoformans serotype D (strain JEC21 / ATCC MYA-565) (Filobasidiella neoformans).